The following is a 738-amino-acid chain: Isocitrate dehydrogenase [NADP] (738 aa).

The NADP(+) site is built by N83 and S85. Positions 130, 133, 137, 143, and 253 each coordinate D-threo-isocitrate. Position 133 (N133) interacts with NADP(+). D346 contacts Mg(2+). Residues Y416 and R543 each coordinate D-threo-isocitrate. Positions 544 and 548 each coordinate Mg(2+). The NADP(+) site is built by G580, H585, R596, D598, and R645.

The protein belongs to the monomeric-type IDH family. Monomer. The cofactor is Mg(2+). Requires Mn(2+) as cofactor.

The protein localises to the cytoplasm. It carries out the reaction D-threo-isocitrate + NADP(+) = 2-oxoglutarate + CO2 + NADPH. Weakly inhibited by oxaloacetate, 2-oxoglutarate and citrate. Severely inhibited by oxaloacetate plus glyoxylate. Functionally, catalyzes the oxidative decarboxylation of isocitrate to 2-oxoglutarate and carbon dioxide with the concomitant reduction of NADP(+). Cannot use NAD(+). The sequence is that of Isocitrate dehydrogenase [NADP] from Corynebacterium glutamicum (strain ATCC 13032 / DSM 20300 / JCM 1318 / BCRC 11384 / CCUG 27702 / LMG 3730 / NBRC 12168 / NCIMB 10025 / NRRL B-2784 / 534).